We begin with the raw amino-acid sequence, 282 residues long: Mitochondrial outer membrane protein porin (282 aa).

It belongs to the eukaryotic mitochondrial porin family.

The protein localises to the mitochondrion outer membrane. Its function is as follows. Forms a channel through the cell membrane that allows diffusion of small hydrophilic molecules. The channel adopts an open conformation at low or zero membrane potential and a closed conformation at potentials above 30-40 mV. The open state has a weak anion selectivity whereas the closed state is cation-selective. This is Mitochondrial outer membrane protein porin (POR1) from Candida albicans (strain SC5314 / ATCC MYA-2876) (Yeast).